A 417-amino-acid polypeptide reads, in one-letter code: Riboflavin biosynthesis protein RibBA (417 aa).

The segment at 1-204 (MTRFDSIERA…IADLIAWRRK (204 aa)) is DHBP synthase. Residues 28–29 (RE), aspartate 33, 141–145 (RPGHT), and glutamate 165 each bind D-ribulose 5-phosphate. A Mg(2+)-binding site is contributed by glutamate 29. Histidine 144 lines the Mg(2+) pocket. Residues 205 to 417 (HEKHVERVAS…LDDFEAGEML (213 aa)) form a GTP cyclohydrolase II region. GTP is bound at residue 259-263 (RVHSE). Positions 264, 275, and 277 each coordinate Zn(2+). Residues glutamine 280, 303–305 (EGR), and threonine 325 contribute to the GTP site. Aspartate 337 serves as the catalytic Proton acceptor; for GTP cyclohydrolase activity. Arginine 339 acts as the Nucleophile; for GTP cyclohydrolase activity in catalysis. 2 residues coordinate GTP: threonine 360 and lysine 365.

The protein in the N-terminal section; belongs to the DHBP synthase family. In the C-terminal section; belongs to the GTP cyclohydrolase II family. The cofactor is Mg(2+). It depends on Mn(2+) as a cofactor. Zn(2+) is required as a cofactor.

It carries out the reaction D-ribulose 5-phosphate = (2S)-2-hydroxy-3-oxobutyl phosphate + formate + H(+). The enzyme catalyses GTP + 4 H2O = 2,5-diamino-6-hydroxy-4-(5-phosphoribosylamino)-pyrimidine + formate + 2 phosphate + 3 H(+). It functions in the pathway cofactor biosynthesis; riboflavin biosynthesis; 2-hydroxy-3-oxobutyl phosphate from D-ribulose 5-phosphate: step 1/1. Its pathway is cofactor biosynthesis; riboflavin biosynthesis; 5-amino-6-(D-ribitylamino)uracil from GTP: step 1/4. Functionally, catalyzes the conversion of D-ribulose 5-phosphate to formate and 3,4-dihydroxy-2-butanone 4-phosphate. In terms of biological role, catalyzes the conversion of GTP to 2,5-diamino-6-ribosylamino-4(3H)-pyrimidinone 5'-phosphate (DARP), formate and pyrophosphate. This Rhodococcus jostii (strain RHA1) protein is Riboflavin biosynthesis protein RibBA.